The primary structure comprises 293 residues: GTPase Era (293 aa).

The Era-type G domain maps to 3 to 170; that stretch reads KSGFITIIGR…VELMVKYMPE (168 aa). The segment at 11–18 is G1; sequence GRPNVGKS. A GTP-binding site is contributed by 11–18; the sequence is GRPNVGKS. The segment at 37–41 is G2; it reads QTTRN. The interval 58–61 is G3; the sequence is DTPG. GTP-binding positions include 58–62 and 120–123; these read DTPGI and NKID. The tract at residues 120–123 is G4; sequence NKID. Residues 149–151 are G5; sequence ISA. The KH type-2 domain occupies 201-278; it reads LSKEVPHGIA…YLEVWVKVKK (78 aa).

Belongs to the TRAFAC class TrmE-Era-EngA-EngB-Septin-like GTPase superfamily. Era GTPase family. As to quaternary structure, monomer.

The protein resides in the cytoplasm. It localises to the cell membrane. An essential GTPase that binds both GDP and GTP, with rapid nucleotide exchange. Plays a role in 16S rRNA processing and 30S ribosomal subunit biogenesis and possibly also in cell cycle regulation and energy metabolism. This chain is GTPase Era, found in Clostridium kluyveri (strain NBRC 12016).